The primary structure comprises 188 residues: dCTP deaminase (188 aa).

DCTP is bound by residues lysine 111 to arginine 116, threonine 135 to glutamate 137, glutamine 156, tyrosine 170, and glutamine 180. Glutamate 137 serves as the catalytic Proton donor/acceptor.

It belongs to the dCTP deaminase family. As to quaternary structure, homotrimer.

It carries out the reaction dCTP + H2O + H(+) = dUTP + NH4(+). The protein operates within pyrimidine metabolism; dUMP biosynthesis; dUMP from dCTP (dUTP route): step 1/2. Its function is as follows. Catalyzes the deamination of dCTP to dUTP. The sequence is that of dCTP deaminase from Azotobacter vinelandii (strain DJ / ATCC BAA-1303).